The primary structure comprises 274 residues: 2-dehydro-3-deoxyphosphooctonate aldolase (274 aa).

It belongs to the KdsA family.

The protein localises to the cytoplasm. It catalyses the reaction D-arabinose 5-phosphate + phosphoenolpyruvate + H2O = 3-deoxy-alpha-D-manno-2-octulosonate-8-phosphate + phosphate. It participates in carbohydrate biosynthesis; 3-deoxy-D-manno-octulosonate biosynthesis; 3-deoxy-D-manno-octulosonate from D-ribulose 5-phosphate: step 2/3. The protein operates within bacterial outer membrane biogenesis; lipopolysaccharide biosynthesis. This is 2-dehydro-3-deoxyphosphooctonate aldolase from Rickettsia canadensis (strain McKiel).